A 161-amino-acid polypeptide reads, in one-letter code: Thy-1 membrane glycoprotein (161 aa).

A signal peptide spans 1–19 (MNPVISITLLLSVLQMSRG). A Pyrrolidone carboxylic acid modification is found at Q20. An Ig-like V-type domain is found at 20–126 (QRVISLTACL…NKTINVIRDK (107 aa)). Cystine bridges form between C28–C130 and C38–C104. N-linked (GlcNAc...) (complex) asparagine; alternate glycosylation occurs at N42. N42 carries N-linked (GlcNAc...) (high mannose) asparagine; alternate glycosylation. N42 carries N-linked (GlcNAc...) asparagine; alternate glycosylation. Phosphoserine is present on S82. N-linked (GlcNAc...) (complex) asparagine; alternate glycosylation is present at N93. The N-linked (GlcNAc...) asparagine; alternate glycan is linked to N93. An N-linked (GlcNAc...) (high mannose) asparagine; in brain; alternate glycan is attached at N117. Residue N117 is glycosylated (N-linked (GlcNAc...) (hybrid) asparagine; in brain; alternate). C130 carries the GPI-anchor amidated cysteine lipid modification. Positions 131-161 (GGISLLVQNTSWLLLLLLSLSFLQATDFISL) are cleaved as a propeptide — removed in mature form.

In terms of processing, glycosylation is tissue specific. Sialylation of N-glycans at Asn-93 in brain and at Asn-42, Asn-93 and Asn-117 in thymus. In terms of tissue distribution, abundant in lymphoid tissues.

Its subcellular location is the cell membrane. Functionally, may play a role in cell-cell or cell-ligand interactions during synaptogenesis and other events in the brain. The sequence is that of Thy-1 membrane glycoprotein (Thy1) from Rattus norvegicus (Rat).